The following is a 445-amino-acid chain: Xylose isomerase (445 aa).

Catalysis depends on residues histidine 107 and aspartate 110. Mg(2+)-binding residues include glutamate 238, glutamate 274, histidine 277, aspartate 302, aspartate 313, aspartate 315, and aspartate 345.

The protein belongs to the xylose isomerase family. In terms of assembly, homotetramer. Mg(2+) serves as cofactor.

The protein localises to the cytoplasm. The enzyme catalyses alpha-D-xylose = alpha-D-xylulofuranose. The polypeptide is Xylose isomerase (xylA) (Priestia megaterium (strain DSM 319 / IMG 1521) (Bacillus megaterium)).